The following is a 375-amino-acid chain: Membrane progesterone receptor epsilon (375 aa).

Residues 1–39 form a disordered region; it reads MPRRLQQRGAGVKGPPASTSRRSHPASASAPRSPPAATT. Topologically, residues 1–84 are cytoplasmic; the sequence is MPRRLQQRGA…VLKPTNETLN (84 aa). The segment covering 15 to 39 has biased composition (low complexity); sequence PPASTSRRSHPASASAPRSPPAATT. Residues 85-105 form a helical membrane-spanning segment; the sequence is FWTHFIPLLLFLSKFCRLFFL. Over 106–114 the chain is Extracellular; sequence GGSDVPFHH. A helical transmembrane segment spans residues 115–135; it reads PWLLPLWCYASGVLLTFAMSC. The Cytoplasmic portion of the chain corresponds to 136–160; the sequence is TAHVFSCLSLRLRAAFFYLDYASIS. Residues 161–181 form a helical membrane-spanning segment; that stretch reads YYGFGSTVAYYYYLLPSLSLL. The Extracellular segment spans residues 182 to 203; that stretch reads DARVMTPYVQQRLGWHVDCTRL. A helical membrane pass occupies residues 204–224; sequence IAVYRALVLPVAFVLAVACTV. The Cytoplasmic segment spans residues 225–241; the sequence is ACCKSRTDWCSYPFALR. A helical membrane pass occupies residues 242-262; the sequence is TFVFVMPLSMACPIMLESWLF. Over 263–299 the chain is Extracellular; sequence DLRGENPTLFVHFYRRYFWLVVAAFFNVSKIPERIQP. The chain crosses the membrane as a helical span at residues 300–320; that stretch reads GLFDIIGHSHQLFHIFTFLSI. Residues 321–341 are Cytoplasmic-facing; sequence YDQVYYVEEGLRQFLQAPPAA. The chain crosses the membrane as a helical span at residues 342–362; the sequence is PTFSGTVGYMLLLVVCLGLVI. Over 363–375 the chain is Extracellular; the sequence is RKFLNSTEFCSKK.

Belongs to the ADIPOR family. As to quaternary structure, homodimer.

The protein localises to the cell membrane. Its function is as follows. Plasma membrane progesterone (P4) receptor coupled to G proteins. Seems to act through a G(s) mediated pathway. May be involved in regulating rapid P4 signaling in the nervous system. Also binds dehydroepiandrosterone (DHEA), pregnanolone, pregnenolone and allopregnanolone. This is Membrane progesterone receptor epsilon from Mus musculus (Mouse).